A 142-amino-acid polypeptide reads, in one-letter code: MLMPKRVKYRKQHRGRMKGNAKGGALVNFGEYGLKAMESHWITAQQIEACRIAITRTLKKTGKLWIRVFPDKSYTKHPAESKLGKGKGNVEGWVAVVKPGKILFEIGGVDEKLAREALEYAATKLPIRTKIVKRHEIGGEAV.

It belongs to the universal ribosomal protein uL16 family. As to quaternary structure, part of the 50S ribosomal subunit.

Binds 23S rRNA and is also seen to make contacts with the A and possibly P site tRNAs. The sequence is that of Large ribosomal subunit protein uL16 from Thermosipho africanus (strain TCF52B).